A 151-amino-acid chain; its full sequence is Large ribosomal subunit protein bL9 (151 aa).

Belongs to the bacterial ribosomal protein bL9 family.

In terms of biological role, binds to the 23S rRNA. The polypeptide is Large ribosomal subunit protein bL9 (Bordetella bronchiseptica (strain ATCC BAA-588 / NCTC 13252 / RB50) (Alcaligenes bronchisepticus)).